Reading from the N-terminus, the 158-residue chain is NAD(P)H-quinone oxidoreductase subunit J, chloroplastic (158 aa).

This sequence belongs to the complex I 30 kDa subunit family. NDH is composed of at least 16 different subunits, 5 of which are encoded in the nucleus.

The protein resides in the plastid. Its subcellular location is the chloroplast thylakoid membrane. The enzyme catalyses a plastoquinone + NADH + (n+1) H(+)(in) = a plastoquinol + NAD(+) + n H(+)(out). It catalyses the reaction a plastoquinone + NADPH + (n+1) H(+)(in) = a plastoquinol + NADP(+) + n H(+)(out). In terms of biological role, NDH shuttles electrons from NAD(P)H:plastoquinone, via FMN and iron-sulfur (Fe-S) centers, to quinones in the photosynthetic chain and possibly in a chloroplast respiratory chain. The immediate electron acceptor for the enzyme in this species is believed to be plastoquinone. Couples the redox reaction to proton translocation, and thus conserves the redox energy in a proton gradient. The sequence is that of NAD(P)H-quinone oxidoreductase subunit J, chloroplastic from Dioscorea elephantipes (Elephant's foot yam).